A 174-amino-acid chain; its full sequence is Cytochrome c-type biogenesis protein CcmE (174 aa).

Residues 1-7 (MTRKSRR) are Cytoplasmic-facing. A helical; Signal-anchor for type II membrane protein membrane pass occupies residues 8–28 (LILIGAGLGVLALAAGLILTA). Over 29-174 (LNDTIVFFRT…PAVSPARSTP (146 aa)) the chain is Periplasmic. Heme is bound by residues histidine 121 and tyrosine 125. Over residues 130–144 (VADALKKSGHWKEGE) the composition is skewed to basic and acidic residues. A disordered region spans residues 130–174 (VADALKKSGHWKEGEEGGPVPPAAKTPGPQSSAAPPAVSPARSTP). The span at 156 to 174 (PGPQSSAAPPAVSPARSTP) shows a compositional bias: low complexity.

Belongs to the CcmE/CycJ family.

It localises to the cell inner membrane. Heme chaperone required for the biogenesis of c-type cytochromes. Transiently binds heme delivered by CcmC and transfers the heme to apo-cytochromes in a process facilitated by CcmF and CcmH. The sequence is that of Cytochrome c-type biogenesis protein CcmE from Azorhizobium caulinodans (strain ATCC 43989 / DSM 5975 / JCM 20966 / LMG 6465 / NBRC 14845 / NCIMB 13405 / ORS 571).